Reading from the N-terminus, the 485-residue chain is ATP synthase subunit beta 1 (485 aa).

Position 157–164 (157–164 (GGAGVGKT)) interacts with ATP.

The protein belongs to the ATPase alpha/beta chains family. F-type ATPases have 2 components, CF(1) - the catalytic core - and CF(0) - the membrane proton channel. CF(1) has five subunits: alpha(3), beta(3), gamma(1), delta(1), epsilon(1). CF(0) has three main subunits: a(1), b(2) and c(9-12). The alpha and beta chains form an alternating ring which encloses part of the gamma chain. CF(1) is attached to CF(0) by a central stalk formed by the gamma and epsilon chains, while a peripheral stalk is formed by the delta and b chains.

It localises to the cell inner membrane. The enzyme catalyses ATP + H2O + 4 H(+)(in) = ADP + phosphate + 5 H(+)(out). In terms of biological role, produces ATP from ADP in the presence of a proton gradient across the membrane. The catalytic sites are hosted primarily by the beta subunits. This is ATP synthase subunit beta 1 from Psychromonas ingrahamii (strain DSM 17664 / CCUG 51855 / 37).